The primary structure comprises 446 residues: Putative ZDHHC-type palmitoyltransferase 2 (446 aa).

2 disordered regions span residues M1–N33 and Q56–P83. N-linked (GlcNAc...) asparagine glycans are attached at residues N5, N8, N14, and N21. Residues Q56–N81 are compositionally biased toward low complexity. N-linked (GlcNAc...) asparagine glycosylation is found at N141, N145, N159, and N165. 5 consecutive transmembrane segments (helical) span residues I178 to W198, I210 to S230, Y305 to I325, L349 to L369, and I410 to I430. The DHHC domain occupies K261–F311.

This sequence belongs to the DHHC palmitoyltransferase family.

It localises to the membrane. The enzyme catalyses L-cysteinyl-[protein] + hexadecanoyl-CoA = S-hexadecanoyl-L-cysteinyl-[protein] + CoA. In Dictyostelium discoideum (Social amoeba), this protein is Putative ZDHHC-type palmitoyltransferase 2.